The sequence spans 355 residues: Ataxin-3-like protein (355 aa).

The 180-residue stretch at 1–180 folds into the Josephin domain; that stretch reads MDFIFHEKQE…DCEADQLLQI (180 aa). C14 functions as the Nucleophile in the catalytic mechanism. The active-site Proton acceptor is H119. N134 is a catalytic residue. 2 disordered regions span residues 209-230 and 253-331; these read LEKV…EDFQ and LSMQ…DISE. Residues 215–228 show a composition bias toward acidic residues; it reads ESDESGTSDQDEED. 2 UIM domains span residues 224–243 and 244–258; these read QDEE…TNRE and DEHL…MQGS. Positions 253–276 are enriched in polar residues; that stretch reads LSMQGSSGNTSQDLPKTSCVTPAS. The span at 278–293 shows a compositional bias: basic and acidic residues; sequence QPKKIKEDYFEKHQQE.

Widely expressed.

Its subcellular location is the nucleus. It catalyses the reaction Thiol-dependent hydrolysis of ester, thioester, amide, peptide and isopeptide bonds formed by the C-terminal Gly of ubiquitin (a 76-residue protein attached to proteins as an intracellular targeting signal).. In terms of biological role, deubiquitinating enzyme that cleaves both 'Lys-48'-linked and 'Lys-63'-linked poly-ubiquitin chains (in vitro). Acts as a deubiquitinating enzyme for the transcription factor KLF5, playing a role in the regulation of KLF5 stability. This Homo sapiens (Human) protein is Ataxin-3-like protein.